The following is a 446-amino-acid chain: MKNISDLWNQALGQIEKKLSKPSFETWMKSTKAHSLQGDTLIITAPNEFARDWLESRYLHLIADTIYDLTGEELSIKFVIPQNQNEEDFMPKSPIKKMSKEEPADFPQNMLNPKYTFDTFVIGSGNRFAHAASLAVAEAPAKAYNPLFIYGGVGLGKTHLMHAIGHYVIDHNPSAKVVYLSSEKFTNEFINSIRDNKAVDFRNRYRNVDVLLIDDIQFLAGKEQTQEEFFHTFNTLHEETKQIVISSDRPPKEIPTLEDRLRSRFEWGLITDITPPDLETRIAILRKKAKAEGLDIPNEVMLYIANQIDSNIRELEGALIRVVAYSSLINKDINADLAAEALKDIIPSSKPKVITIKDIQRIVGQQFNIKLEDFKAKKRTKSVAFPRQIAMYLSREMTDSSLPKIGEEFGGRDHTTVIHAHEKISKLLSDDEQLQQQIKEIKEQLR.

The tract at residues 1–72 (MKNISDLWNQ…ADTIYDLTGE (72 aa)) is domain I, interacts with DnaA modulators. A domain II region spans residues 72–109 (EELSIKFVIPQNQNEEDFMPKSPIKKMSKEEPADFPQN). Positions 110-326 (MLNPKYTFDT…GALIRVVAYS (217 aa)) are domain III, AAA+ region. Glycine 154, glycine 156, lysine 157, and threonine 158 together coordinate ATP. Residues 327–446 (SLINKDINAD…QIKEIKEQLR (120 aa)) form a domain IV, binds dsDNA region.

It belongs to the DnaA family. Oligomerizes as a right-handed, spiral filament on DNA at oriC.

The protein localises to the cytoplasm. Functionally, plays an essential role in the initiation and regulation of chromosomal replication. ATP-DnaA binds to the origin of replication (oriC) to initiate formation of the DNA replication initiation complex once per cell cycle. Binds the DnaA box (a 9 base pair repeat at the origin) and separates the double-stranded (ds)DNA. Forms a right-handed helical filament on oriC DNA; dsDNA binds to the exterior of the filament while single-stranded (ss)DNA is stabiized in the filament's interior. The ATP-DnaA-oriC complex binds and stabilizes one strand of the AT-rich DNA unwinding element (DUE), permitting loading of DNA polymerase. After initiation quickly degrades to an ADP-DnaA complex that is not apt for DNA replication. Binds acidic phospholipids. The sequence is that of Chromosomal replication initiator protein DnaA from Bacillus licheniformis (strain ATCC 14580 / DSM 13 / JCM 2505 / CCUG 7422 / NBRC 12200 / NCIMB 9375 / NCTC 10341 / NRRL NRS-1264 / Gibson 46).